The sequence spans 182 residues: UPF0301 protein NMCC_1249 (182 aa).

This sequence belongs to the UPF0301 (AlgH) family.

This chain is UPF0301 protein NMCC_1249, found in Neisseria meningitidis serogroup C (strain 053442).